Here is a 410-residue protein sequence, read N- to C-terminus: Chloroacetanilide N-alkylformylase, ferredoxin reductase component (410 aa).

FAD-binding residues include glycine 14, aspartate 36, lysine 49, valine 82, arginine 130, aspartate 279, and valine 298.

The protein belongs to the FAD-dependent oxidoreductase family. The chloroacetanilide N-alkylformylase multicomponent enzyme system is composed of an oxygenase component (CndA) and an electron transfer component formed by a ferredoxin reductase (CndC1) and a ferredoxin (CndB1). In vitro, chloroacetanilide N-alkylformylase assays in which CndB1 is substituted for CndB2 demonstrate that the two enzymes possess nearly identical activities. FAD serves as cofactor.

It catalyses the reaction 2 reduced [2Fe-2S]-[ferredoxin] + NAD(+) + H(+) = 2 oxidized [2Fe-2S]-[ferredoxin] + NADH. Its function is as follows. Component of the chloroacetanilide N-alkylformylase multicomponent enzyme system involved in the degradation of chloroacetanilide herbicides (N-alkoxyalkyl-N-chloroacetyl-substituted aniline derivatives). In vitro, catalyzes the transfers of electrons from ferredoxin (CndB1) to NADH. N-dealkylase utilizes NADH, but not NADPH, as the electron donor. In Rhizorhabdus wittichii (strain DC-6 / KACC 16600) (Sphingomonas wittichii), this protein is Chloroacetanilide N-alkylformylase, ferredoxin reductase component.